We begin with the raw amino-acid sequence, 290 residues long: MNFKAGFMTCNQRKPDWLKIKLPTGELSQEVSNTIKIHKLNTICTSGKCPNQGECWRCGTATFMICGNICTRACKFCNVPTGCPLPLNPNEPMEIAQSVEALKLKHVVLTSVDRDDIKDFGASHWVKVIRAVKQKTPNVTMEVLIPDFQGHEDLVSMIIEAKPEVISHNLETVRRLSPHVRSRATYDTSLKVLKQIADSGLVCKSGIMLGLGETRAEILETMDDLRKINCKVMTIGQYLRPSIKNIEVKEYVRPEVFEEYKQIGLEKGFSFVESGPLVRSSYHAEKHVLS.

[4Fe-4S] cluster-binding residues include C44, C49, C55, C70, C74, C77, and S281. Positions 56-270 (WRCGTATFMI…KQIGLEKGFS (215 aa)) constitute a Radical SAM core domain.

It belongs to the radical SAM superfamily. Lipoyl synthase family. The cofactor is [4Fe-4S] cluster.

It localises to the cytoplasm. It carries out the reaction [[Fe-S] cluster scaffold protein carrying a second [4Fe-4S](2+) cluster] + N(6)-octanoyl-L-lysyl-[protein] + 2 oxidized [2Fe-2S]-[ferredoxin] + 2 S-adenosyl-L-methionine + 4 H(+) = [[Fe-S] cluster scaffold protein] + N(6)-[(R)-dihydrolipoyl]-L-lysyl-[protein] + 4 Fe(3+) + 2 hydrogen sulfide + 2 5'-deoxyadenosine + 2 L-methionine + 2 reduced [2Fe-2S]-[ferredoxin]. Its pathway is protein modification; protein lipoylation via endogenous pathway; protein N(6)-(lipoyl)lysine from octanoyl-[acyl-carrier-protein]: step 2/2. Its function is as follows. Catalyzes the radical-mediated insertion of two sulfur atoms into the C-6 and C-8 positions of the octanoyl moiety bound to the lipoyl domains of lipoate-dependent enzymes, thereby converting the octanoylated domains into lipoylated derivatives. The sequence is that of Lipoyl synthase from Treponema denticola (strain ATCC 35405 / DSM 14222 / CIP 103919 / JCM 8153 / KCTC 15104).